Reading from the N-terminus, the 555-residue chain is Glypican-6 (555 aa).

The signal sequence occupies residues 1–23; the sequence is MPSWIGAVILPLLGLLLSLPAGA. Positions 348–357 are enriched in low complexity; sequence PALRSARSAP. Residues 348–376 are disordered; that stretch reads PALRSARSAPENFNTRFRPYNPEERPTTA. The GPI-anchor amidated serine moiety is linked to residue Ser529. Positions 530–555 are cleaved as a propeptide — removed in mature form; the sequence is SAAQRGHSLLSWSLTCIVLALQRLCR.

Belongs to the glypican family.

The protein resides in the cell membrane. Its subcellular location is the secreted. It is found in the extracellular space. Functionally, cell surface proteoglycan that bears heparan sulfate. Putative cell surface coreceptor for growth factors, extracellular matrix proteins, proteases and anti-proteases. Enhances migration and invasion of cancer cells through WNT5A signaling. The sequence is that of Glypican-6 (GPC6) from Pongo abelii (Sumatran orangutan).